A 139-amino-acid polypeptide reads, in one-letter code: Gastrula zinc finger protein XlCGF29.1 (139 aa).

C2H2-type zinc fingers lie at residues 6 to 28 (FTCT…LLIH), 34 to 56 (FDST…LSTH), 62 to 84 (FVCT…LHSH), 90 to 112 (FPCS…LRHH), and 117 to 139 (FPCT…QMIH).

The protein belongs to the krueppel C2H2-type zinc-finger protein family.

The protein localises to the nucleus. Functionally, may be involved in transcriptional regulation. The chain is Gastrula zinc finger protein XlCGF29.1 from Xenopus laevis (African clawed frog).